The primary structure comprises 88 residues: Small ribosomal subunit protein uS15 (88 aa).

Belongs to the universal ribosomal protein uS15 family. In terms of assembly, part of the 30S ribosomal subunit. Forms a bridge to the 50S subunit in the 70S ribosome, contacting the 23S rRNA.

Its function is as follows. One of the primary rRNA binding proteins, it binds directly to 16S rRNA where it helps nucleate assembly of the platform of the 30S subunit by binding and bridging several RNA helices of the 16S rRNA. In terms of biological role, forms an intersubunit bridge (bridge B4) with the 23S rRNA of the 50S subunit in the ribosome. The polypeptide is Small ribosomal subunit protein uS15 (Mesomycoplasma flocculare (Mycoplasma flocculare)).